The following is a 147-amino-acid chain: Putative protein CLUHP3 (147 aa).

The disordered stretch occupies residues 14–47 (KEPEGGRRRLSHPGNMGWMRPSQETTPPDRSHHS).

This chain is Putative protein CLUHP3 (CLUHP3), found in Homo sapiens (Human).